Consider the following 95-residue polypeptide: Small ribosomal subunit protein uS19 (95 aa).

This sequence belongs to the universal ribosomal protein uS19 family.

In terms of biological role, protein S19 forms a complex with S13 that binds strongly to the 16S ribosomal RNA. The protein is Small ribosomal subunit protein uS19 of Bdellovibrio bacteriovorus (strain ATCC 15356 / DSM 50701 / NCIMB 9529 / HD100).